A 261-amino-acid chain; its full sequence is Uridylate kinase (261 aa).

The interval 1-23 (MTEPDVAGAPASKPEPASTGAAS) is disordered. 36-39 (KLGG) is a binding site for ATP. Gly-77 lines the UMP pocket. The ATP site is built by Gly-78 and Arg-82. Residues Asp-97 and 158–165 (MGLPYFST) contribute to the UMP site. ATP is bound by residues Phe-191 and Asp-194.

This sequence belongs to the UMP kinase family. As to quaternary structure, homohexamer.

The protein localises to the cytoplasm. It catalyses the reaction UMP + ATP = UDP + ADP. The protein operates within pyrimidine metabolism; CTP biosynthesis via de novo pathway; UDP from UMP (UMPK route): step 1/1. Its activity is regulated as follows. Inhibited by UTP. In terms of biological role, catalyzes the reversible phosphorylation of UMP to UDP. This is Uridylate kinase from Mycobacterium tuberculosis (strain ATCC 25177 / H37Ra).